Here is a 777-residue protein sequence, read N- to C-terminus: Isoamylase (777 aa).

The first 32 residues, 1–32 (MDPHAPQRQRSGQRLRALALAALACALSPAHA), serve as a signal peptide directing secretion. Residues aspartate 162, glutamate 263, threonine 264, asparagine 266, and aspartate 293 each contribute to the Ca(2+) site. Aspartate 410 functions as the Nucleophile in the catalytic mechanism. A disulfide bridge links cysteine 419 with cysteine 423. The Proton donor role is filled by glutamate 458.

The protein belongs to the glycosyl hydrolase 13 family. In terms of assembly, monomer. The cofactor is Ca(2+).

It catalyses the reaction Hydrolysis of (1-&gt;6)-alpha-D-glucosidic branch linkages in glycogen, amylopectin and their beta-limit dextrins.. Has a high rate of hydrolysis for glycogen. Does not cleave pullulan. This is Isoamylase (iam) from Flavobacterium sp.